Here is a 156-residue protein sequence, read N- to C-terminus: SsrA-binding protein (156 aa).

A disordered region spans residues 135–156 (HALRERQDRREADRAMSERKDR).

Belongs to the SmpB family.

The protein localises to the cytoplasm. Its function is as follows. Required for rescue of stalled ribosomes mediated by trans-translation. Binds to transfer-messenger RNA (tmRNA), required for stable association of tmRNA with ribosomes. tmRNA and SmpB together mimic tRNA shape, replacing the anticodon stem-loop with SmpB. tmRNA is encoded by the ssrA gene; the 2 termini fold to resemble tRNA(Ala) and it encodes a 'tag peptide', a short internal open reading frame. During trans-translation Ala-aminoacylated tmRNA acts like a tRNA, entering the A-site of stalled ribosomes, displacing the stalled mRNA. The ribosome then switches to translate the ORF on the tmRNA; the nascent peptide is terminated with the 'tag peptide' encoded by the tmRNA and targeted for degradation. The ribosome is freed to recommence translation, which seems to be the essential function of trans-translation. The protein is SsrA-binding protein of Kineococcus radiotolerans (strain ATCC BAA-149 / DSM 14245 / SRS30216).